An 88-amino-acid chain; its full sequence is MSIQKSTNSSSLAEVIDRILDKGIVIDAFARVSVVGIEILTIEARVVIASVDTWLRYAEAVGLLRDDVEENGLPERSNSSEGQPRFSI.

It belongs to the gas vesicle GvpA family. As to quaternary structure, the gas vesicle shell is 2 nm thick and consists of a single layer of this protein. It forms helical ribs nearly perpendicular to the long axis of the vesicle.

The protein localises to the gas vesicle shell. Its function is as follows. Gas vesicles are hollow, gas filled proteinaceous nanostructures found in some microorganisms. During planktonic growth they allow positioning of the organism at a favorable depth for light or nutrient acquisition. GvpA forms the protein shell. In terms of biological role, it is not clear if the 2 type A proteins in this organism are functionally redundant. Functionally, when a minimal gvp locus (gvpA2-gvpR-gvpN-gvpF-gvpG-gvpL-gvpS-gvpK-gvpJ-gvpT-gvpU, called pNL29) is expressed in E.coli gas vesicles are made. This is Gas vesicle protein A2 from Priestia megaterium (Bacillus megaterium).